A 287-amino-acid chain; its full sequence is Urease accessory protein UreD (287 aa).

It belongs to the UreD family. As to quaternary structure, ureD, UreF and UreG form a complex that acts as a GTP-hydrolysis-dependent molecular chaperone, activating the urease apoprotein by helping to assemble the nickel containing metallocenter of UreC. The UreE protein probably delivers the nickel.

Its subcellular location is the cytoplasm. In terms of biological role, required for maturation of urease via the functional incorporation of the urease nickel metallocenter. This Herpetosiphon aurantiacus (strain ATCC 23779 / DSM 785 / 114-95) protein is Urease accessory protein UreD.